Reading from the N-terminus, the 96-residue chain is Beta-defensin 132 (96 aa).

The signal sequence occupies residues 1 to 22 (MKFLLLVLAALRFLTQVIPASG). Intrachain disulfides connect Cys-27-Cys-55, Cys-35-Cys-49, and Cys-39-Cys-56. The interval 74–96 (HWQSRRRNTQRKDKKQQTTVTSS) is disordered. Positions 76–87 (QSRRRNTQRKDK) are enriched in basic residues.

The protein belongs to the beta-defensin family.

The protein localises to the secreted. Functionally, has antibacterial activity. The sequence is that of Beta-defensin 132 (DEFB132) from Hylobates lar (Lar gibbon).